We begin with the raw amino-acid sequence, 133 residues long: Urease subunit beta (133 aa).

Residues 106–133 (VFRPNDSNQNAAVKNDAGEDNANKKGGK) are disordered.

Belongs to the urease beta subunit family. As to quaternary structure, heterotrimer of UreA (gamma), UreB (beta) and UreC (alpha) subunits. Three heterotrimers associate to form the active enzyme.

It localises to the cytoplasm. It carries out the reaction urea + 2 H2O + H(+) = hydrogencarbonate + 2 NH4(+). The protein operates within nitrogen metabolism; urea degradation; CO(2) and NH(3) from urea (urease route): step 1/1. The chain is Urease subunit beta from Staphylococcus epidermidis (strain ATCC 12228 / FDA PCI 1200).